A 124-amino-acid polypeptide reads, in one-letter code: Putative iron-sulfur cluster insertion protein ErpA (124 aa).

Positions 52, 116, and 118 each coordinate iron-sulfur cluster.

This sequence belongs to the HesB/IscA family. In terms of assembly, homodimer. Iron-sulfur cluster is required as a cofactor.

Its function is as follows. Required for insertion of 4Fe-4S clusters. This is Putative iron-sulfur cluster insertion protein ErpA from Delftia acidovorans (strain DSM 14801 / SPH-1).